A 395-amino-acid polypeptide reads, in one-letter code: Elongation factor Tu (395 aa).

One can recognise a tr-type G domain in the interval 6-205; the sequence is KPHINVGTIG…NALEKIDLPI (200 aa). Residues 15–22 form a G1 region; the sequence is GHVDHGKT. 15–22 is a GTP binding site; that stretch reads GHVDHGKT. T22 lines the Mg(2+) pocket. The segment at 59–63 is G2; the sequence is GITIS. The tract at residues 80–83 is G3; the sequence is DCPG. Residues 80-84 and 135-138 contribute to the GTP site; these read DCPGH and NKCD. The G4 stretch occupies residues 135–138; that stretch reads NKCD. Residues 173 to 175 are G5; sequence SAV.

This sequence belongs to the TRAFAC class translation factor GTPase superfamily. Classic translation factor GTPase family. EF-Tu/EF-1A subfamily. As to quaternary structure, monomer.

It is found in the cytoplasm. It carries out the reaction GTP + H2O = GDP + phosphate + H(+). Functionally, GTP hydrolase that promotes the GTP-dependent binding of aminoacyl-tRNA to the A-site of ribosomes during protein biosynthesis. This chain is Elongation factor Tu, found in Ehrlichia ruminantium (strain Gardel).